Here is a 300-residue protein sequence, read N- to C-terminus: Probable alpha-L-glutamate ligase (300 aa).

Residues 104-287 (LQLLARQGID…IASRMIAWIE (184 aa)) enclose the ATP-grasp domain. ATP is bound by residues K141, 178–179 (EY), D187, and 211–213 (RSN). Mg(2+)-binding residues include D248, E260, and N262. D248, E260, and N262 together coordinate Mn(2+).

The protein belongs to the RimK family. Requires Mg(2+) as cofactor. Mn(2+) serves as cofactor.

The chain is Probable alpha-L-glutamate ligase from Klebsiella pneumoniae (strain 342).